The sequence spans 223 residues: 23 kDa piroplasm membrane protein (223 aa).

The N-terminal stretch at 1-19 is a signal peptide; it reads MHKFTKVFFVAILVHTLKS. Over 20–197 the chain is Extracellular; it reads GLVFTPVSGT…EEEKSDKKKY (178 aa). N69 carries an N-linked (GlcNAc...) asparagine glycan. Residues 198-218 form a helical membrane-spanning segment; the sequence is VLMVVVVVVFVVVASLVVFLV. At 219–223 the chain is on the cytoplasmic side; that stretch reads KFCLK.

It is found in the membrane. The protein is 23 kDa piroplasm membrane protein of Theileria buffeli.